A 224-amino-acid chain; its full sequence is Peroxiredoxin-6 (224 aa).

Residues 5-169 (LLLGDEAPNF…ILRVIISLQL (165 aa)) form the Thioredoxin domain. The tract at residues 31-40 (DSWGILFSHP) is required and sufficient for targeting to lysosomes and lamellar bodies. Threonine 44 is subject to Phosphothreonine. Cysteine 47 acts as the Cysteine sulfenic acid (-SOH) intermediate; for peroxidase activity in catalysis. N6-acetyllysine is present on lysine 63. Residue tyrosine 89 is modified to Phosphotyrosine. Aspartate 140 functions as the For phospholipase activity in the catalytic mechanism. Position 177 is a phosphothreonine; by MAPK (threonine 177). Lysine 209 carries the post-translational modification N6-acetyllysine; alternate. Lysine 209 bears the N6-succinyllysine; alternate mark.

It belongs to the peroxiredoxin family. Prx6 subfamily. Homodimer. Interacts with GSTP1; mediates PRDX6 glutathionylation and regeneration. Interacts with APEX1. Interacts with STH. May interact with FAM168B. May interact with HTR2A. In terms of processing, irreversibly inactivated by overoxidation of Cys-47 to sulfinic acid (Cys-SO(2)H) and sulfonic acid (Cys-SO(3)H) forms upon oxidative stress. Post-translationally, phosphorylation at Thr-177 by MAP kinases increases the phospholipase activity of the enzyme. The phosphorylated form exhibits a greater lysophosphatidylcholine acyltransferase activity compared to the non-phosphorylated form.

Its subcellular location is the cytoplasm. The protein localises to the lysosome. The enzyme catalyses a hydroperoxide + 2 glutathione = an alcohol + glutathione disulfide + H2O. It carries out the reaction a 1,2-diacyl-sn-glycero-3-phosphocholine + H2O = a 1-acyl-sn-glycero-3-phosphocholine + a fatty acid + H(+). The catalysed reaction is a 1-acyl-sn-glycero-3-phosphocholine + an acyl-CoA = a 1,2-diacyl-sn-glycero-3-phosphocholine + CoA. It catalyses the reaction 1-hexadecanoyl-sn-glycero-3-phosphocholine + hexadecanoyl-CoA = 1,2-dihexadecanoyl-sn-glycero-3-phosphocholine + CoA. The enzyme catalyses 1,2-dihexadecanoyl-sn-glycero-3-phosphocholine + H2O = 1-hexadecanoyl-sn-glycero-3-phosphocholine + hexadecanoate + H(+). Functionally, thiol-specific peroxidase that catalyzes the reduction of hydrogen peroxide and organic hydroperoxides to water and alcohols, respectively. Can reduce H(2)O(2) and short chain organic, fatty acid, and phospholipid hydroperoxides. Also has phospholipase activity, and can therefore either reduce the oxidized sn-2 fatty acyl group of phospholipids (peroxidase activity) or hydrolyze the sn-2 ester bond of phospholipids (phospholipase activity). These activities are dependent on binding to phospholipids at acidic pH and to oxidized phospholipds at cytosolic pH. Plays a role in cell protection against oxidative stress by detoxifying peroxides and in phospholipid homeostasis. Exhibits acyl-CoA-dependent lysophospholipid acyltransferase which mediates the conversion of lysophosphatidylcholine (1-acyl-sn-glycero-3-phosphocholine or LPC) into phosphatidylcholine (1,2-diacyl-sn-glycero-3-phosphocholine or PC). Shows a clear preference for LPC as the lysophospholipid and for palmitoyl CoA as the fatty acyl substrate. In Sus scrofa (Pig), this protein is Peroxiredoxin-6 (PRDX6).